Reading from the N-terminus, the 200-residue chain is UPF0488 protein CG14286 (200 aa).

Disordered regions lie at residues 1 to 28 (MHKRRTAKSINKPPPIQGAIKKPTPVAE) and 139 to 174 (KDFRFNFPSPAEDTSSKEPQPVQDFDPSSLQPAEAG).

This sequence belongs to the UPF0488 family.

This chain is UPF0488 protein CG14286, found in Drosophila melanogaster (Fruit fly).